Here is a 609-residue protein sequence, read N- to C-terminus: CTTNBP2 N-terminal-like protein (609 aa).

Positions 1–10 are enriched in polar residues; it reads MEQNSNSSVA. The segment at 1–29 is disordered; the sequence is MEQNSNSSVADTFAEAPATDADYGTENCS. 2 coiled-coil regions span residues 182–264 and 303–370; these read RMVN…QKQI and IAEG…QQLG. The interval 556-584 is disordered; the sequence is PPAGARGAPPPIPTKPIVPPKREPSLSRL. Pro residues predominate over residues 563–574; the sequence is APPPIPTKPIVP. Serine 586 is subject to Phosphoserine.

The protein localises to the cell projection. It localises to the lamellipodium. The protein resides in the cytoplasm. Its subcellular location is the cytoskeleton. It is found in the stress fiber. In terms of biological role, regulates lamellipodial actin dynamics in a Cortactin-dependent manner and is therefore likely involved in controlling actin branch density, actin-retrograde flow rates and lamellipodial protrusion. Functions by slowing the dissociation of Cortactin from Arp2/3 nucleated branches thereby increasing branch nucleation and junction stability. Associates with core striatin-interacting phosphatase and kinase (STRIPAK) complex to form CTTNBP2NL-STRIPAK complexes. STRIPAK complexes have critical roles in protein (de)phosphorylation and are regulators of multiple signaling pathways including Hippo, MAPK, nuclear receptor and cytoskeleton remodeling. Different types of STRIPAK complexes are involved in a variety of biological processes such as cell growth, differentiation, apoptosis, metabolism and immune regulation. The protein is CTTNBP2 N-terminal-like protein of Drosophila melanogaster (Fruit fly).